The following is a 250-amino-acid chain: Low affinity immunoglobulin gamma Fc region receptor III-A (250 aa).

Residues 1-20 form the signal peptide; sequence MWRLLSPTALLLLVSAGTRA. The Extracellular segment spans residues 21–207; it reads ADLSKAMVVL…TSTFLPHWYQ (187 aa). Ig-like C2-type domains lie at 32 to 105 and 120 to 189; these read PEWN…LEVH and EGDT…VNIT. 2 disulfide bridges follow: C47/C89 and C128/C172. N63, N133, N180, and N187 each carry an N-linked (GlcNAc...) asparagine glycan. The chain crosses the membrane as a helical span at residues 208–228; sequence IAFFLVTALLFVVDTGLHVAV. At 229–250 the chain is on the cytoplasmic side; that stretch reads QRDLQSSVKEWKDGKVTWSHGP.

In terms of assembly, forms a heterooligomeric complex with ITAM-containing signaling subunits FCER1G. Interacts (via transmembrane domain) with signaling subunits; this interaction is a prerequisite for receptor complex expression on the cell surface and intracellular signal transduction. Binds the Fc region of antigen-complexed IgG.

The protein localises to the cell membrane. Functionally, receptor for the invariable Fc fragment of immunoglobulin gamma (IgG). Optimally activated upon binding of clustered antigen-IgG complexes displayed on cell surfaces, triggers lysis of antibody-coated cells, a process known as antibody-dependent cellular cytotoxicity (ADCC). Does not bind free monomeric IgG, thus avoiding inappropriate effector cell activation in the absence of antigenic trigger. Mediates IgG effector functions on natural killer (NK) cells. Binds antigen-IgG complexes generated upon infection and triggers NK cell-dependent cytokine production and degranulation to limit viral load and propagation. Fc-binding subunit that associates with FCER1G adapter to form functional signaling complexes. Following the engagement of antigen-IgG complexes, triggers phosphorylation of immunoreceptor tyrosine-based activation motif (ITAM)-containing adapter with subsequent activation of phosphatidylinositol 3-kinase signaling and sustained elevation of intracellular calcium that ultimately drive NK cell activation. Mediates enhanced ADCC in response to afucosylated IgGs. In Felis catus (Cat), this protein is Low affinity immunoglobulin gamma Fc region receptor III-A.